The primary structure comprises 258 residues: F-box/LRR-repeat protein 25 (258 aa).

The F-box domain maps to 27 to 76 (SDSISNLPDEILHHILSFIPETNLVIRTSVLSKRWRHVWSKTPHLSFEWL). LRR repeat units lie at residues 101-130 (CTSY…SLAF), 136-161 (CNKF…SLTP), 177-202 (RCNL…SLKF), and 224-249 (RRSC…RLRD).

The protein is F-box/LRR-repeat protein 25 (FBL25) of Arabidopsis thaliana (Mouse-ear cress).